The chain runs to 307 residues: tRNA dimethylallyltransferase (307 aa).

ATP is bound at residue G9–T16. T11–T16 is a binding site for substrate. Positions D34 to Q37 are interaction with substrate tRNA.

This sequence belongs to the IPP transferase family. In terms of assembly, monomer. Mg(2+) is required as a cofactor.

The catalysed reaction is adenosine(37) in tRNA + dimethylallyl diphosphate = N(6)-dimethylallyladenosine(37) in tRNA + diphosphate. Catalyzes the transfer of a dimethylallyl group onto the adenine at position 37 in tRNAs that read codons beginning with uridine, leading to the formation of N6-(dimethylallyl)adenosine (i(6)A). This Limosilactobacillus fermentum (strain NBRC 3956 / LMG 18251) (Lactobacillus fermentum) protein is tRNA dimethylallyltransferase.